The sequence spans 262 residues: 4-hydroxy-2-oxo-heptane-1,7-dioate aldolase (262 aa).

The active-site Proton acceptor is H45. Q147 contributes to the substrate binding site. E149 provides a ligand contact to a divalent metal cation. Substrate-binding residues include A174 and D175. Position 175 (D175) interacts with a divalent metal cation.

This sequence belongs to the HpcH/HpaI aldolase family. In terms of assembly, homohexamer; trimer of dimers. The cofactor is a divalent metal cation.

The enzyme catalyses 4-hydroxy-2-oxoheptanedioate = succinate semialdehyde + pyruvate. The protein operates within aromatic compound metabolism; 4-hydroxyphenylacetate degradation; pyruvate and succinate semialdehyde from 4-hydroxyphenylacetate: step 7/7. Its function is as follows. Catalyzes the reversible retro-aldol cleavage of 4-hydroxy-2-ketoheptane-1,7-dioate (HKHD) to pyruvate and succinic semialdehyde. The chain is 4-hydroxy-2-oxo-heptane-1,7-dioate aldolase from Shigella sonnei (strain Ss046).